The primary structure comprises 284 residues: MSAQIISGNKLAQQIKTQIFEHIASYVQQGYRAPGLAVILVGSDPASQVYVGSKRKTCAELGIYSESYDLPADTTETQLLSLINKLNNDEKIDGILVQLPLPEHVDTTKIIEAISPDKDVDGFHPYNVGRLCQRIPTLRACTPYGVMKLLETTGENLYGKHAVIVGASNIVGRPMALELLLGGCTVTITHRFTKNLENHVRQADLLVVAVGQPNLIPGEWIKENAIVIDVGINRIGGKLVGDVEYEAASQKAKFITPVPGGVGPMTVAMLMQNTLLAYQRHINP.

NADP(+)-binding positions include 166 to 168 and isoleucine 232; that span reads GAS.

The protein belongs to the tetrahydrofolate dehydrogenase/cyclohydrolase family. As to quaternary structure, homodimer.

It carries out the reaction (6R)-5,10-methylene-5,6,7,8-tetrahydrofolate + NADP(+) = (6R)-5,10-methenyltetrahydrofolate + NADPH. The catalysed reaction is (6R)-5,10-methenyltetrahydrofolate + H2O = (6R)-10-formyltetrahydrofolate + H(+). Its pathway is one-carbon metabolism; tetrahydrofolate interconversion. Its function is as follows. Catalyzes the oxidation of 5,10-methylenetetrahydrofolate to 5,10-methenyltetrahydrofolate and then the hydrolysis of 5,10-methenyltetrahydrofolate to 10-formyltetrahydrofolate. The protein is Bifunctional protein FolD of Glaesserella parasuis serovar 5 (strain SH0165) (Haemophilus parasuis).